Consider the following 178-residue polypeptide: Large ribosomal subunit protein uL6 (178 aa).

The protein belongs to the universal ribosomal protein uL6 family. As to quaternary structure, part of the 50S ribosomal subunit.

Functionally, this protein binds to the 23S rRNA, and is important in its secondary structure. It is located near the subunit interface in the base of the L7/L12 stalk, and near the tRNA binding site of the peptidyltransferase center. This Thermoplasma volcanium (strain ATCC 51530 / DSM 4299 / JCM 9571 / NBRC 15438 / GSS1) protein is Large ribosomal subunit protein uL6.